The chain runs to 319 residues: Cobalamin biosynthesis protein CobD (319 aa).

3 helical membrane passes run Val54–Tyr76, Gly154–Tyr173, and Val301–Ile318.

This sequence belongs to the CobD/CbiB family.

Its subcellular location is the cell membrane. Its pathway is cofactor biosynthesis; adenosylcobalamin biosynthesis. Converts cobyric acid to cobinamide by the addition of aminopropanol on the F carboxylic group. This Halalkalibacterium halodurans (strain ATCC BAA-125 / DSM 18197 / FERM 7344 / JCM 9153 / C-125) (Bacillus halodurans) protein is Cobalamin biosynthesis protein CobD.